Here is a 429-residue protein sequence, read N- to C-terminus: MPVTIDPRRHSAALFDLDAVVTDTPLDSTVTLVRQLQGIGVGTAVFSTNRNSQGVLTATGLDHLFPVHVDGLASGKVTILVAAANRLMAQPGRCVVVAVDAAGITAARYGGFALVLGLVIGEDQTGHRDTLRNSGADTVVADLGEVIVRTGDRRMSELPDALQTLGLTDDLTARQPAVFFDFDGTLSDIVDDPDSARPVPGATEALQKLATHCPVAILSGRDLADVIKRIGVPGIWYSGSHGFESTAPDGTHHQNDAAEATIPILEQAATQLRDQLGPIPGVMVEHKRFGVAVHYRNVARDRVNEVAVAVRTAGQRNALRVTTGREVIELRPDIDWDKGKTLHWVIDRLHHAGTQVGSASLMPICLGDDITDEDAFDAVRHTDVGGIPIVVRHTEDGNRATAALFTLDSPMHVSEFTERLARQLSDTQR.

Catalysis depends on Asp181, which acts as the Nucleophile. Mg(2+)-binding residues include Asp181, Asp183, and Asp368. 181–183 (DFD) is a substrate binding site.

The protein belongs to the trehalose phosphatase family. The cofactor is Mg(2+).

The catalysed reaction is alpha,alpha-trehalose 6-phosphate + H2O = alpha,alpha-trehalose + phosphate. Its pathway is glycan biosynthesis; trehalose biosynthesis. In terms of biological role, removes the phosphate from trehalose 6-phosphate to produce free trehalose. This Mycobacterium leprae (strain TN) protein is Trehalose-phosphate phosphatase (otsB).